Consider the following 200-residue polypeptide: Non-specific lipid transfer protein GPI-anchored 16 (200 aa).

An N-terminal signal peptide occupies residues 1–20; it reads MEGLTLIVVMMSSFMLGGQG. Cystine bridges form between Cys27-Cys72, Cys38-Cys56, Cys57-Cys98, and Cys70-Cys107. Asn87 carries an N-linked (GlcNAc...) asparagine glycan. A disordered region spans residues 134-182; the sequence is SPGASKAAGTTPTQAPAPDTPADGPTGPTTKSGIRPVDQPMQPTGLAQS. The span at 140 to 163 shows a compositional bias: low complexity; it reads AAGTTPTQAPAPDTPADGPTGPTT. Residue Thr177 is the site of GPI-anchor amidated threonine attachment. The propeptide at 178–200 is removed in mature form; it reads GLAQSSTSPFLPLLFISLILLNL.

The protein belongs to the plant LTP family. As to expression, expressed in seedlings, preferentially in hypocotyls and roots. Also observed in siliques.

The protein resides in the cell membrane. Its function is as follows. Essential protein involved in female gametophyte development. Probable lipid transfer protein. In Arabidopsis thaliana (Mouse-ear cress), this protein is Non-specific lipid transfer protein GPI-anchored 16.